The following is a 491-amino-acid chain: Probable glycine dehydrogenase (decarboxylating) subunit 2 (491 aa).

Lys-273 carries the post-translational modification N6-(pyridoxal phosphate)lysine.

The protein belongs to the GcvP family. C-terminal subunit subfamily. As to quaternary structure, the glycine cleavage system is composed of four proteins: P, T, L and H. In this organism, the P 'protein' is a heterodimer of two subunits. Requires pyridoxal 5'-phosphate as cofactor.

The enzyme catalyses N(6)-[(R)-lipoyl]-L-lysyl-[glycine-cleavage complex H protein] + glycine + H(+) = N(6)-[(R)-S(8)-aminomethyldihydrolipoyl]-L-lysyl-[glycine-cleavage complex H protein] + CO2. The glycine cleavage system catalyzes the degradation of glycine. The P protein binds the alpha-amino group of glycine through its pyridoxal phosphate cofactor; CO(2) is released and the remaining methylamine moiety is then transferred to the lipoamide cofactor of the H protein. The sequence is that of Probable glycine dehydrogenase (decarboxylating) subunit 2 from Bacillus cereus (strain B4264).